The chain runs to 210 residues: Outer-membrane lipoprotein carrier protein (210 aa).

The signal sequence occupies residues 1–26 (MHMIRRAAGALAVFAVAALAAAPAWA).

Belongs to the LolA family. In terms of assembly, monomer.

Its subcellular location is the periplasm. Its function is as follows. Participates in the translocation of lipoproteins from the inner membrane to the outer membrane. Only forms a complex with a lipoprotein if the residue after the N-terminal Cys is not an aspartate (The Asp acts as a targeting signal to indicate that the lipoprotein should stay in the inner membrane). The sequence is that of Outer-membrane lipoprotein carrier protein from Bordetella pertussis (strain Tohama I / ATCC BAA-589 / NCTC 13251).